Consider the following 1099-residue polypeptide: Mediator of RNA polymerase II transcription subunit 5 (1099 aa).

The disordered stretch occupies residues 41–66 (DNDDAKTQEGSGSQDKTDVEESISKP).

Belongs to the Mediator complex subunit 5 family. In terms of assembly, component of the Mediator complex.

The protein resides in the nucleus. Its function is as follows. Component of the Mediator complex, a coactivator involved in the regulated transcription of nearly all RNA polymerase II-dependent genes. Mediator functions as a bridge to convey information from gene-specific regulatory proteins to the basal RNA polymerase II transcription machinery. Mediator is recruited to promoters by direct interactions with regulatory proteins and serves as a scaffold for the assembly of a functional preinitiation complex with RNA polymerase II and the general transcription factors. The sequence is that of Mediator of RNA polymerase II transcription subunit 5 (NUT1) from Candida glabrata (strain ATCC 2001 / BCRC 20586 / JCM 3761 / NBRC 0622 / NRRL Y-65 / CBS 138) (Yeast).